Here is a 296-residue protein sequence, read N- to C-terminus: Formamidopyrimidine-DNA glycosylase (296 aa).

Catalysis depends on Pro2, which acts as the Schiff-base intermediate with DNA. Glu3 acts as the Proton donor in catalysis. Catalysis depends on Lys58, which acts as the Proton donor; for beta-elimination activity. 3 residues coordinate DNA: His104, Arg126, and Lys169. Residues 260 to 296 (SVYDREGQACGTPGCGGTVARIVQAGRSTFYCAACQK) form an FPG-type zinc finger. Arg286 serves as the catalytic Proton donor; for delta-elimination activity.

It belongs to the FPG family. As to quaternary structure, monomer. Zn(2+) is required as a cofactor.

It carries out the reaction Hydrolysis of DNA containing ring-opened 7-methylguanine residues, releasing 2,6-diamino-4-hydroxy-5-(N-methyl)formamidopyrimidine.. It catalyses the reaction 2'-deoxyribonucleotide-(2'-deoxyribose 5'-phosphate)-2'-deoxyribonucleotide-DNA = a 3'-end 2'-deoxyribonucleotide-(2,3-dehydro-2,3-deoxyribose 5'-phosphate)-DNA + a 5'-end 5'-phospho-2'-deoxyribonucleoside-DNA + H(+). Functionally, involved in base excision repair of DNA damaged by oxidation or by mutagenic agents. Acts as a DNA glycosylase that recognizes and removes damaged bases. Has a preference for oxidized purines, such as 7,8-dihydro-8-oxoguanine (8-oxoG). Has AP (apurinic/apyrimidinic) lyase activity and introduces nicks in the DNA strand. Cleaves the DNA backbone by beta-delta elimination to generate a single-strand break at the site of the removed base with both 3'- and 5'-phosphates. The protein is Formamidopyrimidine-DNA glycosylase of Rhizobium etli (strain CIAT 652).